The primary structure comprises 464 residues: MKHRVKHIHFVGIGGVGMCGIAEVLHGLGYTVSGSDMADGATTKRLAAEGVRVFFGHDATYVEGADVVVTSTAVKADNPEVLAARDKRIPVIPRALMLAELMRFKQGIAIAGTHGKTTTTSLTASVLGAAGLDPTFVIGGKLTAAGTNAKLGLGEFLVAEADESDASFLHLTPVMAVVTNIDADHMDTYDHSFDKLKQAFVDFLQRMPFYGRAVLCVDDPNVREIRERVTKPVTTYGLDDSADIYAENVRAAAGQMHFDVVVKNGAITRFPLVLNLPGRHNVLNALSAIAIGLECGASIEAIQKGLSEFAGVGRRFQRYGEVKAQDGGSFTLIDDYGHHPVEMAATLAAVRGAFPDRRLLLAFQPHRYTRTRDLFEDFVKVLSGVDALLLSEVYAAGEAPIVAADGRALARAVRVGGKVEPLFVEDIADMPQAILDAARDGDVVVTMGAGSVGAVPGKVTALAG.

Residue Gly112–Thr118 coordinates ATP.

This sequence belongs to the MurCDEF family.

It localises to the cytoplasm. It carries out the reaction UDP-N-acetyl-alpha-D-muramate + L-alanine + ATP = UDP-N-acetyl-alpha-D-muramoyl-L-alanine + ADP + phosphate + H(+). It functions in the pathway cell wall biogenesis; peptidoglycan biosynthesis. Cell wall formation. The sequence is that of UDP-N-acetylmuramate--L-alanine ligase from Chromobacterium violaceum (strain ATCC 12472 / DSM 30191 / JCM 1249 / CCUG 213 / NBRC 12614 / NCIMB 9131 / NCTC 9757 / MK).